The chain runs to 143 residues: Large ribosomal subunit protein uL11 (143 aa).

It belongs to the universal ribosomal protein uL11 family. In terms of assembly, part of the ribosomal stalk of the 50S ribosomal subunit. Interacts with L10 and the large rRNA to form the base of the stalk. L10 forms an elongated spine to which L12 dimers bind in a sequential fashion forming a multimeric L10(L12)X complex. Post-translationally, one or more lysine residues are methylated.

Forms part of the ribosomal stalk which helps the ribosome interact with GTP-bound translation factors. The chain is Large ribosomal subunit protein uL11 from Koribacter versatilis (strain Ellin345).